A 74-amino-acid chain; its full sequence is Large ribosomal subunit protein uL14c (74 aa).

The protein belongs to the universal ribosomal protein uL14 family. In terms of assembly, part of the 50S ribosomal subunit.

The protein localises to the plastid. The protein resides in the chloroplast. Its function is as follows. Binds to 23S rRNA. The sequence is that of Large ribosomal subunit protein uL14c (rpl14) from Oenothera ammophila (Evening primerose).